The chain runs to 312 residues: Aspartate carbamoyltransferase catalytic subunit (312 aa).

The carbamoyl phosphate site is built by R54 and T55. L-aspartate is bound at residue K83. Residues R104, H132, and Q135 each coordinate carbamoyl phosphate. L-aspartate is bound by residues R165 and R226. Positions 263 and 264 each coordinate carbamoyl phosphate.

This sequence belongs to the aspartate/ornithine carbamoyltransferase superfamily. ATCase family. Heterooligomer of catalytic and regulatory chains.

The enzyme catalyses carbamoyl phosphate + L-aspartate = N-carbamoyl-L-aspartate + phosphate + H(+). Its pathway is pyrimidine metabolism; UMP biosynthesis via de novo pathway; (S)-dihydroorotate from bicarbonate: step 2/3. In terms of biological role, catalyzes the condensation of carbamoyl phosphate and aspartate to form carbamoyl aspartate and inorganic phosphate, the committed step in the de novo pyrimidine nucleotide biosynthesis pathway. This chain is Aspartate carbamoyltransferase catalytic subunit, found in Methanothermobacter thermautotrophicus (strain ATCC 29096 / DSM 1053 / JCM 10044 / NBRC 100330 / Delta H) (Methanobacterium thermoautotrophicum).